The sequence spans 345 residues: Endochitinase 4 (345 aa).

Residues 1 to 27 form the signal peptide; it reads MAPLLNTGLVILPLIVSTLLGPMPAFA. Residues Asn-29 and Asn-89 are each glycosylated (N-linked (GlcNAc...) asparagine). The 305-residue stretch at 41–345 folds into the GH18 domain; it reads KVLQGYWENW…TFGDNVKGRL (305 aa). Catalysis depends on Glu-163, which acts as the Proton donor. N-linked (GlcNAc...) asparagine glycosylation occurs at Asn-316.

It belongs to the glycosyl hydrolase 18 family. Chitinase class V subfamily.

It is found in the secreted. The catalysed reaction is Random endo-hydrolysis of N-acetyl-beta-D-glucosaminide (1-&gt;4)-beta-linkages in chitin and chitodextrins.. In terms of biological role, secreted chitinase involved in the degradation of chitin, a component of the cell walls of fungi and exoskeletal elements of some animals (including worms and arthropods). Participates in the infection process and directly acts in the penetration process of the host cuticle. The polypeptide is Endochitinase 4 (chi4) (Metarhizium robertsii (strain ARSEF 23 / ATCC MYA-3075) (Metarhizium anisopliae (strain ARSEF 23))).